The sequence spans 292 residues: ATP synthase gamma chain (292 aa).

The protein belongs to the ATPase gamma chain family. In terms of assembly, F-type ATPases have 2 components, CF(1) - the catalytic core - and CF(0) - the membrane proton channel. CF(1) has five subunits: alpha(3), beta(3), gamma(1), delta(1), epsilon(1). CF(0) has three main subunits: a, b and c.

Its subcellular location is the cell inner membrane. In terms of biological role, produces ATP from ADP in the presence of a proton gradient across the membrane. The gamma chain is believed to be important in regulating ATPase activity and the flow of protons through the CF(0) complex. The sequence is that of ATP synthase gamma chain from Rhodopseudomonas palustris (strain BisB18).